A 187-amino-acid chain; its full sequence is Casparian strip membrane protein 5 (187 aa).

Residues 1-24 (MKSGQAEIMETSKGIQKSGLMSRR) lie on the Cytoplasmic side of the membrane. A helical membrane pass occupies residues 25–45 (IAILEFILRIVAFFNTIGSAI). At 46-74 (LMGTTHETLPFFTQFIRFQAEYNDLPALT) the chain is on the extracellular side. The helical transmembrane segment at 75–95 (FFVVANAVVSGYLILSLTLAF) threads the bilayer. At 96 to 107 (VHIVKRKTQNTR) the chain is on the cytoplasmic side. The helical transmembrane segment at 108 to 128 (ILLIILDVAMLGLLTSGASSA) threads the bilayer. The Extracellular segment spans residues 129–161 (AAIVYLAHNGNNKTNWFAICQQFNSFCERISGS). An N-linked (GlcNAc...) asparagine glycan is attached at asparagine 140. A helical transmembrane segment spans residues 162–182 (LIGSFIAIVLLILLILLSAIA). The Cytoplasmic portion of the chain corresponds to 183–187 (LSRRH).

Belongs to the Casparian strip membrane proteins (CASP) family. As to quaternary structure, homodimer and heterodimers with other CASP proteins. Interacts with CASP1, CASP3 and CASP4.

It localises to the cell membrane. Functionally, regulates membrane-cell wall junctions and localized cell wall deposition. Required for establishment of the Casparian strip membrane domain (CSD) and the subsequent formation of Casparian strips, a cell wall modification of the root endodermis that determines an apoplastic barrier between the intraorganismal apoplasm and the extraorganismal apoplasm and prevents lateral diffusion. The sequence is that of Casparian strip membrane protein 5 (CASP5) from Arabidopsis thaliana (Mouse-ear cress).